The primary structure comprises 368 residues: Protein-glutamate methylesterase/protein-glutamine glutaminase 2 (368 aa).

Positions Lys6–Glu123 constitute a Response regulatory domain. Asp57 bears the 4-aspartylphosphate mark. Residues Ile169–Leu355 enclose the CheB-type methylesterase domain. Residues Ser181, His207, and Asp303 contribute to the active site.

The protein belongs to the CheB family. Post-translationally, phosphorylated by CheA. Phosphorylation of the N-terminal regulatory domain activates the methylesterase activity.

The protein resides in the cytoplasm. The enzyme catalyses [protein]-L-glutamate 5-O-methyl ester + H2O = L-glutamyl-[protein] + methanol + H(+). It catalyses the reaction L-glutaminyl-[protein] + H2O = L-glutamyl-[protein] + NH4(+). Functionally, involved in chemotaxis. Part of a chemotaxis signal transduction system that modulates chemotaxis in response to various stimuli. Catalyzes the demethylation of specific methylglutamate residues introduced into the chemoreceptors (methyl-accepting chemotaxis proteins or MCP) by CheR. Also mediates the irreversible deamidation of specific glutamine residues to glutamic acid. The sequence is that of Protein-glutamate methylesterase/protein-glutamine glutaminase 2 from Hahella chejuensis (strain KCTC 2396).